The primary structure comprises 173 residues: MELLIAGKVLGSHNLKGEVKVISDLDNIEVLVGNKVILELADSQQKLLTIKKIEHLVANKWIFSFEEIKNKQDTIEIRNANIKVRRDIVGIGEDEYLVSDMIGFKVYDVKGDEYLGEITEIMDTAAHDIYVIESEEFETMIPDVDVFIKNIDFENRKMLVDTIEGMKESKVKK.

Residues Glu-93–Met-166 form the PRC barrel domain.

This sequence belongs to the RimM family. As to quaternary structure, binds ribosomal protein uS19.

Its subcellular location is the cytoplasm. Functionally, an accessory protein needed during the final step in the assembly of 30S ribosomal subunit, possibly for assembly of the head region. Essential for efficient processing of 16S rRNA. May be needed both before and after RbfA during the maturation of 16S rRNA. It has affinity for free ribosomal 30S subunits but not for 70S ribosomes. The sequence is that of Ribosome maturation factor RimM from Fusobacterium nucleatum subsp. nucleatum (strain ATCC 25586 / DSM 15643 / BCRC 10681 / CIP 101130 / JCM 8532 / KCTC 2640 / LMG 13131 / VPI 4355).